The primary structure comprises 308 residues: Probable 5-dehydro-4-deoxyglucarate dehydratase (308 aa).

This sequence belongs to the DapA family.

It catalyses the reaction 5-dehydro-4-deoxy-D-glucarate + H(+) = 2,5-dioxopentanoate + CO2 + H2O. Its pathway is carbohydrate acid metabolism; D-glucarate degradation; 2,5-dioxopentanoate from D-glucarate: step 2/2. The protein is Probable 5-dehydro-4-deoxyglucarate dehydratase (ycbC) of Bacillus subtilis (strain 168).